Consider the following 269-residue polypeptide: GTP cyclohydrolase FolE2 (269 aa).

This sequence belongs to the GTP cyclohydrolase IV family.

It catalyses the reaction GTP + H2O = 7,8-dihydroneopterin 3'-triphosphate + formate + H(+). It functions in the pathway cofactor biosynthesis; 7,8-dihydroneopterin triphosphate biosynthesis; 7,8-dihydroneopterin triphosphate from GTP: step 1/1. In terms of biological role, converts GTP to 7,8-dihydroneopterin triphosphate. The protein is GTP cyclohydrolase FolE2 of Burkholderia mallei (strain NCTC 10229).